The sequence spans 289 residues: MKSGFVSIIGRTNAGKSSFLNALLNEKIAIVSHKQNATRRKINGIVMNGEDQIIFTDTPGLHESNKAINQLLISQAIKSMGDCDLIVFLAPIHDDTSDYEKFLALNPEKPHILVLTKVDESSNAKVLEKITKYQKFQDKFAALLTFSTKQPTYKKPLLDEICKLLPEHEYFYDPEFLTPTNEKEIFREFILEAIYENLSDEIPYLSDAIIKSVKEKTGITEIYASIITERDIHKSMIIGKNGETIKRIGIFARKLIQNLTNTKVFLKLDVVVKKGWSKEEKSLNQIIGY.

The Era-type G domain maps to K2–E167. The tract at residues G10 to S17 is G1. G10–S17 provides a ligand contact to GTP. The segment at N36–R40 is G2. The G3 stretch occupies residues D57–G60. Residues D57–L61 and T116–D119 contribute to the GTP site. The segment at T116–D119 is G4. A G5 region spans residues F146 to T148. Residues I194–K274 form the KH type-2 domain.

This sequence belongs to the TRAFAC class TrmE-Era-EngA-EngB-Septin-like GTPase superfamily. Era GTPase family. As to quaternary structure, monomer.

It localises to the cytoplasm. The protein localises to the cell inner membrane. Its function is as follows. An essential GTPase that binds both GDP and GTP, with rapid nucleotide exchange. Plays a role in 16S rRNA processing and 30S ribosomal subunit biogenesis and possibly also in cell cycle regulation and energy metabolism. This is GTPase Era from Campylobacter concisus (strain 13826).